The following is a 329-amino-acid chain: Phosphate import ATP-binding protein PstB (329 aa).

Positions 83–325 (FEIRNFNFWY…PKQKATNSYI (243 aa)) constitute an ABC transporter domain. Residue 116 to 123 (GKSGCGKS) coordinates ATP.

It belongs to the ABC transporter superfamily. Phosphate importer (TC 3.A.1.7) family. The complex is composed of two ATP-binding proteins (PstB), two transmembrane proteins (PstC and PstA) and a solute-binding protein (PstS).

It localises to the cell membrane. The enzyme catalyses phosphate(out) + ATP + H2O = ADP + 2 phosphate(in) + H(+). Its function is as follows. Part of the ABC transporter complex PstSACB involved in phosphate import. Responsible for energy coupling to the transport system. This Mycoplasma genitalium (strain ATCC 33530 / DSM 19775 / NCTC 10195 / G37) (Mycoplasmoides genitalium) protein is Phosphate import ATP-binding protein PstB.